The sequence spans 307 residues: NAD kinase 1 (307 aa).

The active-site Proton acceptor is the aspartate 67. NAD(+) is bound by residues 67–68 (DG), 149–150 (ND), arginine 179, and aspartate 181.

The protein belongs to the NAD kinase family. It depends on a divalent metal cation as a cofactor.

Its subcellular location is the cytoplasm. The catalysed reaction is NAD(+) + ATP = ADP + NADP(+) + H(+). Involved in the regulation of the intracellular balance of NAD and NADP, and is a key enzyme in the biosynthesis of NADP. Catalyzes specifically the phosphorylation on 2'-hydroxyl of the adenosine moiety of NAD to yield NADP. The protein is NAD kinase 1 of Prochlorococcus marinus (strain SARG / CCMP1375 / SS120).